The primary structure comprises 481 residues: Aspartyl/glutamyl-tRNA(Asn/Gln) amidotransferase subunit B (481 aa).

It belongs to the GatB/GatE family. GatB subfamily. In terms of assembly, heterotrimer of A, B and C subunits.

The enzyme catalyses L-glutamyl-tRNA(Gln) + L-glutamine + ATP + H2O = L-glutaminyl-tRNA(Gln) + L-glutamate + ADP + phosphate + H(+). The catalysed reaction is L-aspartyl-tRNA(Asn) + L-glutamine + ATP + H2O = L-asparaginyl-tRNA(Asn) + L-glutamate + ADP + phosphate + 2 H(+). Its function is as follows. Allows the formation of correctly charged Asn-tRNA(Asn) or Gln-tRNA(Gln) through the transamidation of misacylated Asp-tRNA(Asn) or Glu-tRNA(Gln) in organisms which lack either or both of asparaginyl-tRNA or glutaminyl-tRNA synthetases. The reaction takes place in the presence of glutamine and ATP through an activated phospho-Asp-tRNA(Asn) or phospho-Glu-tRNA(Gln). This chain is Aspartyl/glutamyl-tRNA(Asn/Gln) amidotransferase subunit B, found in Cellvibrio japonicus (strain Ueda107) (Pseudomonas fluorescens subsp. cellulosa).